A 501-amino-acid chain; its full sequence is Glycerol kinase (501 aa).

T17 lines the ADP pocket. Residues T17, T18, and S19 each contribute to the ATP site. T17 is a binding site for sn-glycerol 3-phosphate. R21 is an ADP binding site. Residues R87, E88, Y139, and D243 each contribute to the sn-glycerol 3-phosphate site. Glycerol contacts are provided by R87, E88, Y139, D243, and Q244. ADP-binding residues include T265 and G308. T265, G308, Q312, and G409 together coordinate ATP. 2 residues coordinate ADP: G409 and N413.

This sequence belongs to the FGGY kinase family.

The catalysed reaction is glycerol + ATP = sn-glycerol 3-phosphate + ADP + H(+). The protein operates within polyol metabolism; glycerol degradation via glycerol kinase pathway; sn-glycerol 3-phosphate from glycerol: step 1/1. Its activity is regulated as follows. Inhibited by fructose 1,6-bisphosphate (FBP). Key enzyme in the regulation of glycerol uptake and metabolism. Catalyzes the phosphorylation of glycerol to yield sn-glycerol 3-phosphate. This is Glycerol kinase from Pseudomonas syringae pv. tomato (strain ATCC BAA-871 / DC3000).